The sequence spans 88 residues: Acylphosphatase (88 aa).

The Acylphosphatase-like domain occupies A3 to G88. Catalysis depends on residues R18 and N36.

Belongs to the acylphosphatase family.

It catalyses the reaction an acyl phosphate + H2O = a carboxylate + phosphate + H(+). The protein is Acylphosphatase (acyP) of Xanthomonas oryzae pv. oryzae (strain MAFF 311018).